We begin with the raw amino-acid sequence, 252 residues long: DNA-(apurinic or apyrimidinic site) lyase Nei2 (252 aa).

The Schiff-base intermediate with DNA role is filled by proline 2. The Proton donor role is filled by glutamate 3. Lysine 51 functions as the Proton donor (in beta-elimination) in the catalytic mechanism. An FPG-type zinc finger spans residues 216–250 (WVYGRAGEPCRRCGTLIQTDRGGERVTYWCPVCQT). Cysteine 225, cysteine 228, cysteine 245, and cysteine 248 together coordinate Zn(2+).

Belongs to the FPG family. As to quaternary structure, monomer. Requires Zn(2+) as cofactor.

The enzyme catalyses 2'-deoxyribonucleotide-(2'-deoxyribose 5'-phosphate)-2'-deoxyribonucleotide-DNA = a 3'-end 2'-deoxyribonucleotide-(2,3-dehydro-2,3-deoxyribose 5'-phosphate)-DNA + a 5'-end 5'-phospho-2'-deoxyribonucleoside-DNA + H(+). In terms of biological role, involved in base excision repair of DNA damaged by oxidation or by mutagenic agents. Acts as DNA glycosylase that recognizes and removes damaged bases. Its function is as follows. Involved in the repair of psoralen-UVA DNA cross-links. A lyase that cleaves single-stranded (ss)DNA but not double-stranded (ds)DNA with an abasic site. Has 5-hydroxyuracil (5-OH-U) glycosylase activity on ssDNA with 5-OH-U, with 10-fold less activity on dsDNA, but weak to no uracil glycosylase activity. Has weak glycosylase activity on thymine glycol and dihydrothymine residues in ssDNA. Cleaves the DNA backbone by beta-delta elimination to generate a single-strand break at the site of the removed base with both 3'- and 5'-phosphates. The protein is DNA-(apurinic or apyrimidinic site) lyase Nei2 of Mycolicibacterium smegmatis (strain ATCC 700084 / mc(2)155) (Mycobacterium smegmatis).